A 191-amino-acid polypeptide reads, in one-letter code: GDP-mannose pyrophosphatase (191 aa).

GDP-alpha-D-mannose contacts are provided by residues Tyr-17, 38–40 (KRE), Arg-67, and 85–87 (AGL). The Nudix hydrolase domain maps to 43 to 180 (DRGNGATILL…EIRDGKTVLL (138 aa)). Positions 85, 100, and 104 each coordinate Mg(2+). Residues 86-106 (GLLDNDEPEVCIRKEAIEETG) carry the Nudix box motif. Residues Glu-104, Glu-127, 150 to 151 (DE), and Lys-176 contribute to the GDP-alpha-D-mannose site. Glu-151 is a Mg(2+) binding site.

It belongs to the Nudix hydrolase family. NudK subfamily. Homodimer. The cofactor is Mg(2+).

It catalyses the reaction GDP-alpha-D-mannose + H2O = alpha-D-mannose 1-phosphate + GMP + 2 H(+). In terms of biological role, nucleoside diphosphate sugar hydrolase that hydrolyzes GDP-mannose as its preferred substrate, yielding GMP and mannose-1-phosphate. This Salmonella choleraesuis (strain SC-B67) protein is GDP-mannose pyrophosphatase (nudK).